Reading from the N-terminus, the 556-residue chain is Formate--tetrahydrofolate ligase (556 aa).

65-72 is an ATP binding site; that stretch reads TPAGEGKS.

This sequence belongs to the formate--tetrahydrofolate ligase family.

It carries out the reaction (6S)-5,6,7,8-tetrahydrofolate + formate + ATP = (6R)-10-formyltetrahydrofolate + ADP + phosphate. It participates in one-carbon metabolism; tetrahydrofolate interconversion. The polypeptide is Formate--tetrahydrofolate ligase (Clostridium botulinum (strain Alaska E43 / Type E3)).